The following is a 392-amino-acid chain: Zinc transporter zipt-7.1 (392 aa).

N63 carries N-linked (GlcNAc...) asparagine glycosylation. 2 helical membrane passes run 82 to 102 and 114 to 134; these read VFSL…LFFI and ILLA…IIPH. The segment at 139–162 is disordered; that stretch reads HSHGAHDHDHAHSHDHAHNDHSHD. Residues 142–162 are compositionally biased toward basic and acidic residues; sequence GAHDHDHAHSHDHAHNDHSHD. Residues 170 to 190 form a helical membrane-spanning segment; the sequence is GIYVIAGILVFMMVEQLVRII. The N-linked (GlcNAc...) asparagine glycan is linked to N248. Helical transmembrane passes span 255-275, 304-324, and 331-351; these read IGAS…TVLL, VTAL…NPVL, and GAIM…SVIP. Residue N361 is glycosylated (N-linked (GlcNAc...) asparagine). The helical transmembrane segment at 371–391 threads the bilayer; sequence SLVHLIAICMGVGMMYIVSLV.

Belongs to the ZIP transporter (TC 2.A.5) family. KE4/Catsup subfamily.

It is found in the membrane. Zinc transporter which regulates intracellular zinc levels. Required for spermatogenesis in both hermaphrodites and males where it resides in an inactive form in immature sperm, spermatids, but is likely activated in response to reduced spe-4 and spe-6 function. Upon activation, mediates the release of zinc from internal stores in spermatids into the cytoplasm. The resulting increase in cytoplasmic zinc levels promotes spermatid activation and subsequent differentiation into mature motile sperm that are capable of fertilization. This is Zinc transporter zipt-7.1 from Caenorhabditis briggsae.